Here is a 418-residue protein sequence, read N- to C-terminus: Histidine--tRNA ligase (418 aa).

It belongs to the class-II aminoacyl-tRNA synthetase family. In terms of assembly, homodimer.

The protein resides in the cytoplasm. It catalyses the reaction tRNA(His) + L-histidine + ATP = L-histidyl-tRNA(His) + AMP + diphosphate + H(+). The polypeptide is Histidine--tRNA ligase (Dehalococcoides mccartyi (strain ATCC BAA-2266 / KCTC 15142 / 195) (Dehalococcoides ethenogenes (strain 195))).